The primary structure comprises 108 residues: Probable 4-amino-4-deoxy-L-arabinose-phosphoundecaprenol flippase subunit ArnE (108 aa).

3 helical membrane passes run 32–52 (PLLL…LVWL), 58–78 (VPVG…TLAA), and 85–105 (TLSL…AIMG). One can recognise an EamA domain in the interval 34–106 (LLWLGGSVLL…IVAGVAIMGS (73 aa)).

Belongs to the ArnE family. As to quaternary structure, heterodimer of ArnE and ArnF.

It localises to the cell inner membrane. Its pathway is bacterial outer membrane biogenesis; lipopolysaccharide biosynthesis. In terms of biological role, translocates 4-amino-4-deoxy-L-arabinose-phosphoundecaprenol (alpha-L-Ara4N-phosphoundecaprenol) from the cytoplasmic to the periplasmic side of the inner membrane. This is Probable 4-amino-4-deoxy-L-arabinose-phosphoundecaprenol flippase subunit ArnE from Erwinia tasmaniensis (strain DSM 17950 / CFBP 7177 / CIP 109463 / NCPPB 4357 / Et1/99).